We begin with the raw amino-acid sequence, 630 residues long: Differentially expressed in FDCP 6 (630 aa).

Tyr-210 is subject to Phosphotyrosine. The 97-residue stretch at 216 to 312 folds into the PH domain; the sequence is DVLKQGYLWK…WTAAIQTAIR (97 aa). The residue at position 225 (Lys-225) is an N6-acetyllysine. 3 disordered regions span residues 318 to 341, 378 to 418, and 552 to 630; these read KTSLHKDLKQKRREQREQRERRRA, LQEE…ELKK, and HPIE…APGN. 2 stretches are compositionally biased toward basic and acidic residues: residues 331-341 and 378-392; these read EQREQRERRRA and LQEEEERRRSQHKEL. Over residues 588 to 606 the composition is skewed to polar residues; that stretch reads WGSQGNRTLSVNSSEQKSL. Ser-590 bears the Phosphoserine mark. The segment covering 620–630 has biased composition (basic and acidic residues); it reads QEEKLDPAPGN.

As to quaternary structure, interacts with IRF4, activated RAC1 and F-actin. Both the phosphorylated and non-phosphorylated forms bind phosphatidylinositol 3,4,5-trisphosphate (PtdInsP3). Interacts with ZAP70. Interacts with RAB11A. Tyrosine-phosphorylated by tyrosine-protein kinase LCK in response to T-cell activation. In terms of tissue distribution, thymus.

The protein localises to the cytoplasm. Its subcellular location is the cell membrane. The protein resides in the nucleus. It is found in the cytoskeleton. It localises to the perinuclear region. The protein localises to the cell projection. Its subcellular location is the filopodium. Phosphatidylinositol 3,4,5-trisphosphate-dependent guanine nucleotide exchange factor (GEF) which plays a role in the activation of Rho GTPases RAC1, RhoA and CDC42. Can regulate cell morphology in cooperation with activated RAC1. Involved in immune homeostasis by ensuring proper trafficking and availability of T-cell regulator CTLA-4 at T-cell surface. Plays a role in Th2 (T helper cells) development and/or activation, perhaps by interfering with ZAP70 signaling. Required for optimal T-cell effector function, lymphocyte homeostasis and the prevention of systemic autoimmunity. This Mus musculus (Mouse) protein is Differentially expressed in FDCP 6 (Def6).